We begin with the raw amino-acid sequence, 1486 residues long: Chromosome partition protein MukB (1486 aa).

ATP is bound at residue 34–41; sequence GGNGAGKS. 3 coiled-coil regions span residues 326–418, 444–480, and 509–603; these read LEAD…QYNQ, LETFQAKELEATEKMLSLEQKMSMAQTAHSQFEQAYQ, and RHLA…RAPV. Residues 666-783 form a flexible hinge region; that stretch reads PGGSEDQRLN…EVPLFGRAAR (118 aa). Coiled-coil stretches lie at residues 835–923, 977–1115, and 1209–1266; these read EAEI…AKLE, EMLS…TAKA, and VEAI…QNVS.

This sequence belongs to the SMC family. MukB subfamily. As to quaternary structure, homodimerization via its hinge domain. Binds to DNA via its C-terminal region. Interacts, and probably forms a ternary complex, with MukE and MukF via its C-terminal region. The complex formation is stimulated by calcium or magnesium. Interacts with tubulin-related protein FtsZ.

The protein localises to the cytoplasm. It localises to the nucleoid. Plays a central role in chromosome condensation, segregation and cell cycle progression. Functions as a homodimer, which is essential for chromosome partition. Involved in negative DNA supercoiling in vivo, and by this means organize and compact chromosomes. May achieve or facilitate chromosome segregation by condensation DNA from both sides of a centrally located replisome during cell division. The protein is Chromosome partition protein MukB of Escherichia coli O1:K1 / APEC.